The primary structure comprises 388 residues: Chorismate synthase (388 aa).

Residues Arg-39 and Arg-45 each coordinate NADP(+). Residues 130 to 132 (RSS), 251 to 252 (NA), Ala-296, 311 to 315 (KPIPT), and Arg-337 contribute to the FMN site.

Belongs to the chorismate synthase family. Homotetramer. FMNH2 is required as a cofactor.

The enzyme catalyses 5-O-(1-carboxyvinyl)-3-phosphoshikimate = chorismate + phosphate. Its pathway is metabolic intermediate biosynthesis; chorismate biosynthesis; chorismate from D-erythrose 4-phosphate and phosphoenolpyruvate: step 7/7. Catalyzes the anti-1,4-elimination of the C-3 phosphate and the C-6 proR hydrogen from 5-enolpyruvylshikimate-3-phosphate (EPSP) to yield chorismate, which is the branch point compound that serves as the starting substrate for the three terminal pathways of aromatic amino acid biosynthesis. This reaction introduces a second double bond into the aromatic ring system. This is Chorismate synthase from Streptococcus equi subsp. zooepidemicus (strain H70).